The following is a 99-amino-acid chain: Ragulator complex protein LAMTOR4 (99 aa).

An N-acetylmethionine modification is found at Met1. The residue at position 2 (Thr2) is an N-acetylthreonine; in Ragulator complex protein LAMTOR4, N-terminally processed. Residue Ser67 is modified to Phosphoserine; by PKA.

The protein belongs to the LAMTOR4 family. In terms of assembly, part of the Ragulator complex composed of LAMTOR1, LAMTOR2, LAMTOR3, LAMTOR4 and LAMTOR5. LAMTOR4 and LAMTOR5 form a heterodimer that interacts, through LAMTOR1, with a LAMTOR2, LAMTOR3 heterodimer. The Ragulator complex interacts with both the mTORC1 complex and heterodimers constituted of the Rag GTPases RagA/RRAGA, RagB/RRAGB, RagC/RRAGC and RagD/RRAGD; regulated by amino acid availability. The Ragulator complex interacts with SLC38A9; the probable amino acid sensor. Component of the lysosomal folliculin complex (LFC), composed of FLCN, FNIP1 (or FNIP2), RagA/RRAGA or RagB/RRAGB GDP-bound, RagC/RRAGC or RagD/RRAGD GTP-bound, and Ragulator. In terms of processing, phosphorylation at Ser-67 by PKA inhibits Ragulator complex assembly.

It localises to the lysosome. Functionally, as part of the Ragulator complex it is involved in amino acid sensing and activation of mTORC1, a signaling complex promoting cell growth in response to growth factors, energy levels, and amino acids. Activated by amino acids through a mechanism involving the lysosomal V-ATPase, the Ragulator plays a dual role for the small GTPases Rag (RagA/RRAGA, RagB/RRAGB, RagC/RRAGC and/or RagD/RRAGD): it (1) acts as a guanine nucleotide exchange factor (GEF), activating the small GTPases Rag and (2) mediates recruitment of Rag GTPases to the lysosome membrane. Activated Ragulator and Rag GTPases function as a scaffold recruiting mTORC1 to lysosomes where it is in turn activated. The chain is Ragulator complex protein LAMTOR4 from Homo sapiens (Human).